We begin with the raw amino-acid sequence, 317 residues long: tRNA dimethylallyltransferase (317 aa).

16–23 contacts ATP; it reads GPTASGKS. Position 18 to 23 (18 to 23) interacts with substrate; the sequence is TASGKS. Interaction with substrate tRNA regions lie at residues 41–44, 165–169, and 247–252; these read DSAQ, QRIQR, and RCVGYR.

It belongs to the IPP transferase family. Monomer. Mg(2+) serves as cofactor.

The enzyme catalyses adenosine(37) in tRNA + dimethylallyl diphosphate = N(6)-dimethylallyladenosine(37) in tRNA + diphosphate. In terms of biological role, catalyzes the transfer of a dimethylallyl group onto the adenine at position 37 in tRNAs that read codons beginning with uridine, leading to the formation of N6-(dimethylallyl)adenosine (i(6)A). In Nitrosomonas eutropha (strain DSM 101675 / C91 / Nm57), this protein is tRNA dimethylallyltransferase.